We begin with the raw amino-acid sequence, 456 residues long: ATP synthase subunit beta 1 (456 aa).

152-159 (GGAGVGKS) provides a ligand contact to ATP.

It belongs to the ATPase alpha/beta chains family. As to quaternary structure, F-type ATPases have 2 components, CF(1) - the catalytic core - and CF(0) - the membrane proton channel. CF(1) has five subunits: alpha(3), beta(3), gamma(1), delta(1), epsilon(1). CF(0) has three main subunits: a(1), b(2) and c(9-12). The alpha and beta chains form an alternating ring which encloses part of the gamma chain. CF(1) is attached to CF(0) by a central stalk formed by the gamma and epsilon chains, while a peripheral stalk is formed by the delta and b chains.

Its subcellular location is the cell membrane. It carries out the reaction ATP + H2O + 4 H(+)(in) = ADP + phosphate + 5 H(+)(out). Functionally, produces ATP from ADP in the presence of a proton gradient across the membrane. The catalytic sites are hosted primarily by the beta subunits. The sequence is that of ATP synthase subunit beta 1 from Listeria monocytogenes serovar 1/2a (strain ATCC BAA-679 / EGD-e).